A 192-amino-acid chain; its full sequence is Shikimate kinase (192 aa).

15 to 20 (GAGKTT) lines the ATP pocket. A Mg(2+)-binding site is contributed by Thr19. Positions 37, 61, and 83 each coordinate substrate. Arg121 contacts ATP. Arg140 contacts substrate.

Belongs to the shikimate kinase family. Monomer. The cofactor is Mg(2+).

Its subcellular location is the cytoplasm. The enzyme catalyses shikimate + ATP = 3-phosphoshikimate + ADP + H(+). It participates in metabolic intermediate biosynthesis; chorismate biosynthesis; chorismate from D-erythrose 4-phosphate and phosphoenolpyruvate: step 5/7. Its function is as follows. Catalyzes the specific phosphorylation of the 3-hydroxyl group of shikimic acid using ATP as a cosubstrate. The chain is Shikimate kinase from Cupriavidus pinatubonensis (strain JMP 134 / LMG 1197) (Cupriavidus necator (strain JMP 134)).